Consider the following 298-residue polypeptide: UDP-N-acetylenolpyruvoylglucosamine reductase (298 aa).

The region spanning Lys26–Gly191 is the FAD-binding PCMH-type domain. Arg170 is a catalytic residue. Ser220 acts as the Proton donor in catalysis. Glu290 is a catalytic residue.

This sequence belongs to the MurB family. The cofactor is FAD.

Its subcellular location is the cytoplasm. It carries out the reaction UDP-N-acetyl-alpha-D-muramate + NADP(+) = UDP-N-acetyl-3-O-(1-carboxyvinyl)-alpha-D-glucosamine + NADPH + H(+). It functions in the pathway cell wall biogenesis; peptidoglycan biosynthesis. In terms of biological role, cell wall formation. This Lactobacillus helveticus (strain DPC 4571) protein is UDP-N-acetylenolpyruvoylglucosamine reductase.